A 227-amino-acid chain; its full sequence is PKHD-type hydroxylase BURPS668_A1690 (227 aa).

In terms of domain architecture, Fe2OG dioxygenase spans 78–178 (KVFPPLFNRY…RVASFFWIQS (101 aa)). Positions 96, 98, and 159 each coordinate Fe cation. Arginine 169 contributes to the 2-oxoglutarate binding site.

It depends on Fe(2+) as a cofactor. Requires L-ascorbate as cofactor.

The chain is PKHD-type hydroxylase BURPS668_A1690 from Burkholderia pseudomallei (strain 668).